Here is a 420-residue protein sequence, read N- to C-terminus: Sodium-dependent phosphate transport protein 4 (420 aa).

Residues 1 to 21 (MATKTELSPTARESKNAQDMQ) form a disordered region. Residues Asn49, Asn60, Asn68, and Asn77 are each glycosylated (N-linked (GlcNAc...) asparagine). Transmembrane regions (helical) follow at residues 126–146 (SIAL…GGFI), 154–174 (FVFY…FVVI), 218–238 (IWSI…MVVY), 256–276 (LLSA…GYLA), 292–314 (IATI…LNSG), 319–341 (TALL…INVL), 357–377 (GFSS…LSQD), and 385–405 (VFFL…IFGE).

This sequence belongs to the major facilitator superfamily. Sodium/anion cotransporter family. Expressed in the liver and kidney. It is detected in proximal tubules in renal cortex as well as some tubules and glomeruli, with highest expression at the apical side of proximal tubules (at protein level).

Its subcellular location is the endoplasmic reticulum membrane. The protein resides in the cell membrane. The catalysed reaction is urate(in) + Na(+)(out) = urate(out) + Na(+)(in). Transports organic anions in a voltage-driven, multispecific, manner, on the apical side of renal proximal tubule. In particular, participates in the secretion of urate from the cell into the lumen. Urate is the end product of purine metabolism. May have roles in the metabolism and secretion of estrone sulfate, estradiol-17-beta-glucuronide, ochratoxin A, as wells as drugs such as bumetanide. The protein is Sodium-dependent phosphate transport protein 4 (SLC17A3) of Homo sapiens (Human).